Consider the following 313-residue polypeptide: Meiotically up-regulated gene 100 protein, mitochondrial (313 aa).

2 helical membrane passes run 147–167 (VFDYLFFLYGLSGTSILYTAG) and 178–198 (SGFITPFFQLLLLVLLFTLTF).

It localises to the mitochondrion inner membrane. Has a role in meiosis. The protein is Meiotically up-regulated gene 100 protein, mitochondrial (mug100) of Schizosaccharomyces pombe (strain 972 / ATCC 24843) (Fission yeast).